A 325-amino-acid chain; its full sequence is Beta-ketoacyl-[acyl-carrier-protein] synthase III (325 aa).

Active-site residues include cysteine 112 and histidine 250. The interval 251-255 (QANSR) is ACP-binding. Asparagine 280 is an active-site residue.

Belongs to the thiolase-like superfamily. FabH family. In terms of assembly, homodimer.

It localises to the cytoplasm. It carries out the reaction malonyl-[ACP] + acetyl-CoA + H(+) = 3-oxobutanoyl-[ACP] + CO2 + CoA. The protein operates within lipid metabolism; fatty acid biosynthesis. Its function is as follows. Catalyzes the condensation reaction of fatty acid synthesis by the addition to an acyl acceptor of two carbons from malonyl-ACP. Catalyzes the first condensation reaction which initiates fatty acid synthesis and may therefore play a role in governing the total rate of fatty acid production. Possesses both acetoacetyl-ACP synthase and acetyl transacylase activities. Its substrate specificity determines the biosynthesis of branched-chain and/or straight-chain of fatty acids. This Lactococcus lactis subsp. cremoris (strain SK11) protein is Beta-ketoacyl-[acyl-carrier-protein] synthase III.